The chain runs to 335 residues: Tryptophan--tRNA ligase (335 aa).

ATP-binding positions include 9–11 (QST) and 17–18 (GN). Positions 10–18 (STNSLTLGN) match the 'HIGH' region motif. D137 contributes to the L-tryptophan binding site. ATP-binding positions include 149 to 151 (GKD), I189, and 198 to 202 (KMSKS). The short motif at 198-202 (KMSKS) is the 'KMSKS' region element.

Belongs to the class-I aminoacyl-tRNA synthetase family. As to quaternary structure, homodimer.

The protein resides in the cytoplasm. It catalyses the reaction tRNA(Trp) + L-tryptophan + ATP = L-tryptophyl-tRNA(Trp) + AMP + diphosphate + H(+). Catalyzes the attachment of tryptophan to tRNA(Trp). The chain is Tryptophan--tRNA ligase from Malacoplasma penetrans (strain HF-2) (Mycoplasma penetrans).